Reading from the N-terminus, the 131-residue chain is MSHIPANLRYTDSHEWVLDNGDGTVTIGITDHAQEALGDVVFVELPETGRELDAGEEFGVIESVKAASDLYLPLSGEIIAVNESLEDAPETVNDNPYEDGWIIKLKLAEPEALESLLDATAYDALVSAEED.

The Lipoyl-binding domain occupies 24–106 (TVTIGITDHA…YEDGWIIKLK (83 aa)). The residue at position 65 (Lys-65) is an N6-lipoyllysine.

Belongs to the GcvH family. The glycine cleavage system is composed of four proteins: P, T, L and H. The cofactor is (R)-lipoate.

Its function is as follows. The glycine cleavage system catalyzes the degradation of glycine. The H protein shuttles the methylamine group of glycine from the P protein to the T protein. This chain is Glycine cleavage system H protein, found in Chromohalobacter salexigens (strain ATCC BAA-138 / DSM 3043 / CIP 106854 / NCIMB 13768 / 1H11).